Reading from the N-terminus, the 101-residue chain is Ubiquitin-related modifier 1 (101 aa).

G101 is subject to 1-thioglycine. G101 is covalently cross-linked (Glycyl lysine isopeptide (Gly-Lys) (interchain with K-? in acceptor proteins)).

The protein belongs to the URM1 family. C-terminal thiocarboxylation occurs in 2 steps, it is first acyl-adenylated (-COAMP) via the hesA/moeB/thiF part of the MOCS3 homolog, then thiocarboxylated (-COSH) via the rhodanese domain of the MOCS3 homolog.

The protein localises to the cytoplasm. The protein operates within tRNA modification; 5-methoxycarbonylmethyl-2-thiouridine-tRNA biosynthesis. In terms of biological role, acts as a sulfur carrier required for 2-thiolation of mcm(5)S(2)U at tRNA wobble positions of cytosolic tRNA(Lys), tRNA(Glu) and tRNA(Gln). Serves as sulfur donor in tRNA 2-thiolation reaction by being thiocarboxylated (-COSH) at its C-terminus by MOCS3. The sulfur is then transferred to tRNA to form 2-thiolation of mcm(5)S(2)U. Also acts as a ubiquitin-like protein (UBL) that is covalently conjugated via an isopeptide bond to lysine residues of target proteins. The thiocarboxylated form serves as substrate for conjugation and oxidative stress specifically induces the formation of UBL-protein conjugates. This chain is Ubiquitin-related modifier 1, found in Gallus gallus (Chicken).